A 463-amino-acid polypeptide reads, in one-letter code: Fumarate hydratase class II (463 aa).

Substrate is bound by residues 98–100 (SGT), 129–132 (HPND), 139–141 (SSN), and T187. The active-site Proton donor/acceptor is the H188. Residue S318 is part of the active site. Residues S319 and 324 to 326 (KVN) each bind substrate.

Belongs to the class-II fumarase/aspartase family. Fumarase subfamily. Homotetramer.

It localises to the cytoplasm. It catalyses the reaction (S)-malate = fumarate + H2O. It functions in the pathway carbohydrate metabolism; tricarboxylic acid cycle; (S)-malate from fumarate: step 1/1. Involved in the TCA cycle. Catalyzes the stereospecific interconversion of fumarate to L-malate. This chain is Fumarate hydratase class II, found in Brucella melitensis biotype 1 (strain ATCC 23456 / CCUG 17765 / NCTC 10094 / 16M).